We begin with the raw amino-acid sequence, 122 residues long: MVQIQTYLTVADNTGGKIAQCIKVLGGSKKRYARVGDIIVVAVKQAIPNSPVKKGDVHKAVVVRTSKEIRRKNGTYVRFDDNACVILDANLNPRGKRVFGPVARELRDANFMKVVSLASEVI.

This sequence belongs to the universal ribosomal protein uL14 family. Part of the 50S ribosomal subunit. Forms a cluster with proteins L3 and L19. In the 70S ribosome, L14 and L19 interact and together make contacts with the 16S rRNA in bridges B5 and B8.

In terms of biological role, binds to 23S rRNA. Forms part of two intersubunit bridges in the 70S ribosome. The chain is Large ribosomal subunit protein uL14 from Borrelia hermsii (strain HS1 / DAH).